Consider the following 178-residue polypeptide: MSRIGKRIIEIPSSVQASVEGSKLLFKNSKEKHELETHNRVKITLENNQLSFQPVGEDAQSRAYWGTYGALANNIVTGLSTGFSKTLEVNGVGYKVALGNKTLDLSLGFSHPVKYPIPAGIEMVVEKNTITIKGSDKQKVGQVAAEIRSFRPPEPYKGKGVKYSDEVIIRKAGKTAKK.

It belongs to the universal ribosomal protein uL6 family. Part of the 50S ribosomal subunit.

In terms of biological role, this protein binds to the 23S rRNA, and is important in its secondary structure. It is located near the subunit interface in the base of the L7/L12 stalk, and near the tRNA binding site of the peptidyltransferase center. The polypeptide is Large ribosomal subunit protein uL6 (Helicobacter pylori (strain G27)).